The following is a 391-amino-acid chain: Yellow-related salivary protein ASP4 (391 aa).

Positions 1–18 are cleaved as a signal peptide; the sequence is MKIFLCIIAVVSLQGVVA. Asn29 carries an N-linked (GlcNAc...) asparagine glycan.

The protein belongs to the major royal jelly protein family. In terms of tissue distribution, female salivary gland (at protein level).

The protein resides in the secreted. In terms of biological role, probably modulates blood feeding of sand flies on vertebrate species by binding and sequestering different mediators involved in the host response. Binds biogenic amines. Binds serotonin and dopamine with high affinity. Binds adrenaline, octopamine and adrenaline with medium affinity. Binds histamine with low affinity. The protein is Yellow-related salivary protein ASP4 of Phlebotomus orientalis (Phlebotomine sand fly).